The sequence spans 394 residues: Guanine nucleotide-binding protein G(s) subunit alpha (394 aa).

The segment at 1–23 (MGCLGNSKTEDQRNEEKAQREAN) is disordered. Gly2 carries N-palmitoyl glycine lipidation. A lipid anchor (S-palmitoyl cysteine) is attached at Cys3. The segment covering 8–23 (KTEDQRNEEKAQREAN) has biased composition (basic and acidic residues). Residues 39-394 (ATHRLLLLGA…RMHLRQYELL (356 aa)) enclose the G-alpha domain. Residues 42–55 (RLLLLGAGESGKST) are G1 motif. 47 to 55 (GAGESGKST) contacts GTP. Position 54 (Ser54) interacts with Mg(2+). A disordered region spans residues 68–90 (FNGEGGEEDPQAARSNSDGEKAT). The G2 motif stretch occupies residues 196 to 204 (DLLRCRVLT). GTP-binding positions include 197–204 (LLRCRVLT), 223–227 (DVGGQ), 292–295 (NKQD), and Ala366. Residue Thr204 participates in Mg(2+) binding. Residues 219-228 (FHMFDVGGQR) are G3 motif. Residues 288-295 (ILFLNKQD) are G4 motif. Positions 364–369 (TCAVDT) are G5 motif.

This sequence belongs to the G-alpha family. G(s) subfamily. As to quaternary structure, heterotrimeric G proteins are composed of 3 units; alpha, beta and gamma. The alpha chain contains the guanine nucleotide binding site. Interacts with CRY1; the interaction may block GPCR-mediated regulation of cAMP concentrations. Interacts with ADCY6 and stimulates its adenylyl cyclase activity. Interacts with ADCY2 and ADCY5. Stimulates the ADCY5 adenylyl cyclase activity. Interaction with SASH1.

It is found in the cell membrane. Functionally, guanine nucleotide-binding proteins (G proteins) function as transducers in numerous signaling pathways controlled by G protein-coupled receptors (GPCRs). Signaling involves the activation of adenylyl cyclases, resulting in increased levels of the signaling molecule cAMP. GNAS functions downstream of several GPCRs, including beta-adrenergic receptors. Stimulates the Ras signaling pathway via RAPGEF2. This chain is Guanine nucleotide-binding protein G(s) subunit alpha (GNAS), found in Cricetulus griseus (Chinese hamster).